The following is a 100-amino-acid chain: Large ribosomal subunit protein uL23 (100 aa).

The protein belongs to the universal ribosomal protein uL23 family. In terms of assembly, part of the 50S ribosomal subunit. Contacts protein L29, and trigger factor when it is bound to the ribosome.

One of the early assembly proteins it binds 23S rRNA. One of the proteins that surrounds the polypeptide exit tunnel on the outside of the ribosome. Forms the main docking site for trigger factor binding to the ribosome. The sequence is that of Large ribosomal subunit protein uL23 from Synechococcus sp. (strain WH7803).